The primary structure comprises 488 residues: NADH-ubiquinone oxidoreductase chain 2 (488 aa).

A run of 14 helical transmembrane segments spans residues 4–24, 45–65, 84–104, 111–131, 134–154, 168–188, 215–235, 252–272, 282–302, 308–328, 334–354, 375–395, 400–420, and 456–476; these read LFLA…LLIH, WLGL…APLL, FCQI…FDFF, AFEF…MISA, LIAM…LAAS, YLIL…MIYG, IFMG…AVPF, AFLS…VFIY, IFFF…MAQT, LAYS…CGTI, LLIG…IVLA, ILAI…PLAG, FYLF…VGVV, and LLLA…SPLF.

This sequence belongs to the complex I subunit 2 family.

Its subcellular location is the mitochondrion inner membrane. The enzyme catalyses a ubiquinone + NADH + 5 H(+)(in) = a ubiquinol + NAD(+) + 4 H(+)(out). In terms of biological role, core subunit of the mitochondrial membrane respiratory chain NADH dehydrogenase (Complex I) that is believed to belong to the minimal assembly required for catalysis. Complex I functions in the transfer of electrons from NADH to the respiratory chain. The immediate electron acceptor for the enzyme is believed to be ubiquinone. This Oenothera berteroana (Bertero's evening primrose) protein is NADH-ubiquinone oxidoreductase chain 2 (ND2).